The chain runs to 390 residues: UPF0496 protein At1g20180 (390 aa).

The next 2 membrane-spanning stretches (helical) occupy residues 228 to 248 (LGGYSLVITHSAIVITLLIIA) and 250 to 270 (HSILGVFAAPALLGLCSFCLL).

Belongs to the UPF0496 family.

The protein localises to the membrane. This chain is UPF0496 protein At1g20180, found in Arabidopsis thaliana (Mouse-ear cress).